The chain runs to 98 residues: Aspartyl/glutamyl-tRNA(Asn/Gln) amidotransferase subunit C (98 aa).

Belongs to the GatC family. In terms of assembly, heterotrimer of A, B and C subunits.

It catalyses the reaction L-glutamyl-tRNA(Gln) + L-glutamine + ATP + H2O = L-glutaminyl-tRNA(Gln) + L-glutamate + ADP + phosphate + H(+). The enzyme catalyses L-aspartyl-tRNA(Asn) + L-glutamine + ATP + H2O = L-asparaginyl-tRNA(Asn) + L-glutamate + ADP + phosphate + 2 H(+). Allows the formation of correctly charged Asn-tRNA(Asn) or Gln-tRNA(Gln) through the transamidation of misacylated Asp-tRNA(Asn) or Glu-tRNA(Gln) in organisms which lack either or both of asparaginyl-tRNA or glutaminyl-tRNA synthetases. The reaction takes place in the presence of glutamine and ATP through an activated phospho-Asp-tRNA(Asn) or phospho-Glu-tRNA(Gln). This is Aspartyl/glutamyl-tRNA(Asn/Gln) amidotransferase subunit C from Micrococcus luteus (strain ATCC 4698 / DSM 20030 / JCM 1464 / CCM 169 / CCUG 5858 / IAM 1056 / NBRC 3333 / NCIMB 9278 / NCTC 2665 / VKM Ac-2230) (Micrococcus lysodeikticus).